The sequence spans 327 residues: tRNA dimethylallyltransferase (327 aa).

18 to 25 (GPTASGKT) serves as a coordination point for ATP. A substrate-binding site is contributed by 20–25 (TASGKT). Interaction with substrate tRNA regions lie at residues 43–46 (DSAL), 167–171 (QRVQR), and 251–256 (RCVGYR).

Belongs to the IPP transferase family. In terms of assembly, monomer. The cofactor is Mg(2+).

The enzyme catalyses adenosine(37) in tRNA + dimethylallyl diphosphate = N(6)-dimethylallyladenosine(37) in tRNA + diphosphate. Functionally, catalyzes the transfer of a dimethylallyl group onto the adenine at position 37 in tRNAs that read codons beginning with uridine, leading to the formation of N6-(dimethylallyl)adenosine (i(6)A). The sequence is that of tRNA dimethylallyltransferase from Methylibium petroleiphilum (strain ATCC BAA-1232 / LMG 22953 / PM1).